A 155-amino-acid polypeptide reads, in one-letter code: S-ribosylhomocysteine lyase (155 aa).

Residues H58, H62, and C125 each coordinate Fe cation.

It belongs to the LuxS family. Homodimer. Fe cation is required as a cofactor.

It carries out the reaction S-(5-deoxy-D-ribos-5-yl)-L-homocysteine = (S)-4,5-dihydroxypentane-2,3-dione + L-homocysteine. In terms of biological role, involved in the synthesis of autoinducer 2 (AI-2) which is secreted by bacteria and is used to communicate both the cell density and the metabolic potential of the environment. The regulation of gene expression in response to changes in cell density is called quorum sensing. Catalyzes the transformation of S-ribosylhomocysteine (RHC) to homocysteine (HC) and 4,5-dihydroxy-2,3-pentadione (DPD). This Helicobacter pylori (strain Shi470) protein is S-ribosylhomocysteine lyase.